We begin with the raw amino-acid sequence, 366 residues long: Ribosomal RNA large subunit methyltransferase M (366 aa).

S-adenosyl-L-methionine is bound by residues serine 188, 221–224, aspartate 240, aspartate 260, and aspartate 277; that span reads CPGG. Residue lysine 306 is the Proton acceptor of the active site.

Belongs to the class I-like SAM-binding methyltransferase superfamily. RNA methyltransferase RlmE family. RlmM subfamily. As to quaternary structure, monomer.

The protein resides in the cytoplasm. The catalysed reaction is cytidine(2498) in 23S rRNA + S-adenosyl-L-methionine = 2'-O-methylcytidine(2498) in 23S rRNA + S-adenosyl-L-homocysteine + H(+). Catalyzes the 2'-O-methylation at nucleotide C2498 in 23S rRNA. The sequence is that of Ribosomal RNA large subunit methyltransferase M from Salmonella agona (strain SL483).